Reading from the N-terminus, the 144-residue chain is Ribosome-binding factor A (144 aa).

Disordered regions lie at residues 1 to 22 (MPRHHQKKSSASGGGSQRQLRV) and 125 to 144 (TPAVQKDLEQDPDSDREEEQ). Over residues 134–144 (QDPDSDREEEQ) the composition is skewed to acidic residues.

The protein belongs to the RbfA family. In terms of assembly, monomer. Binds 30S ribosomal subunits, but not 50S ribosomal subunits or 70S ribosomes.

Its subcellular location is the cytoplasm. One of several proteins that assist in the late maturation steps of the functional core of the 30S ribosomal subunit. Associates with free 30S ribosomal subunits (but not with 30S subunits that are part of 70S ribosomes or polysomes). Required for efficient processing of 16S rRNA. May interact with the 5'-terminal helix region of 16S rRNA. In Bradyrhizobium diazoefficiens (strain JCM 10833 / BCRC 13528 / IAM 13628 / NBRC 14792 / USDA 110), this protein is Ribosome-binding factor A.